Here is a 98-residue protein sequence, read N- to C-terminus: Integration host factor subunit alpha (98 aa).

The tract at residues Leu54–Ser74 is disordered.

This sequence belongs to the bacterial histone-like protein family. In terms of assembly, heterodimer of an alpha and a beta chain.

Its function is as follows. This protein is one of the two subunits of integration host factor, a specific DNA-binding protein that functions in genetic recombination as well as in transcriptional and translational control. The sequence is that of Integration host factor subunit alpha (ihfA) from Pasteurella multocida (strain Pm70).